The following is a 213-amino-acid chain: MKTSIAIVDYGMGNLRSVAQALKKAEPAADVAIVDTPAAIRAADRVVLPGQGAMPDCMRCLGESGLQEAVVEASRTKPLLGVCVGEQMLFDWSAEGDTKGLGLLPGKVVRFELDGRLQDDGSRFKVPQMGWNRVRQSRAHALWDGVPDDAYFYFVHSYYVMPDDPAHTVGETAYGAPFTSAVARDNIFATQFHPEKSAEVGLRLYRNFVHWKP.

The region spanning 4–213 (SIAIVDYGMG…LYRNFVHWKP (210 aa)) is the Glutamine amidotransferase type-1 domain. Catalysis depends on cysteine 83, which acts as the Nucleophile. Catalysis depends on residues histidine 193 and glutamate 195.

In terms of assembly, heterodimer of HisH and HisF.

It is found in the cytoplasm. The catalysed reaction is 5-[(5-phospho-1-deoxy-D-ribulos-1-ylimino)methylamino]-1-(5-phospho-beta-D-ribosyl)imidazole-4-carboxamide + L-glutamine = D-erythro-1-(imidazol-4-yl)glycerol 3-phosphate + 5-amino-1-(5-phospho-beta-D-ribosyl)imidazole-4-carboxamide + L-glutamate + H(+). The enzyme catalyses L-glutamine + H2O = L-glutamate + NH4(+). It participates in amino-acid biosynthesis; L-histidine biosynthesis; L-histidine from 5-phospho-alpha-D-ribose 1-diphosphate: step 5/9. IGPS catalyzes the conversion of PRFAR and glutamine to IGP, AICAR and glutamate. The HisH subunit catalyzes the hydrolysis of glutamine to glutamate and ammonia as part of the synthesis of IGP and AICAR. The resulting ammonia molecule is channeled to the active site of HisF. The polypeptide is Imidazole glycerol phosphate synthase subunit HisH (Burkholderia multivorans (strain ATCC 17616 / 249)).